The primary structure comprises 269 residues: Aminoglycoside (3'') (9) adenylyltransferase (269 aa).

It catalyses the reaction streptomycin + ATP = 3''-O-adenylylstreptomycin + diphosphate. It carries out the reaction spectinomycin + ATP = 9-O-adenylylspectinomycin + diphosphate. Functionally, mediates bacterial resistance to the antibiotic spectinomycin and probably also to streptomycin. The polypeptide is Aminoglycoside (3'') (9) adenylyltransferase (Rhizobium radiobacter (Agrobacterium tumefaciens)).